We begin with the raw amino-acid sequence, 361 residues long: Plasmid recombination enzyme (361 aa).

DNA contacts are provided by Tyr-44 and Tyr-114. The segment at Arg-331–Leu-361 is disordered.

This sequence belongs to the plasmid mobilization pre family.

Its function is as follows. The interaction of the RSA site and the pre protein may not only serve a function in plasmid maintenance, but also contribute to the distribution of small antibiotic resistance plasmids among Gram-positive bacteria. The chain is Plasmid recombination enzyme (preA) from Lactiplantibacillus plantarum (Lactobacillus plantarum).